The following is a 90-amino-acid chain: Small ribosomal subunit protein bS16 (90 aa).

It belongs to the bacterial ribosomal protein bS16 family.

This is Small ribosomal subunit protein bS16 from Listeria monocytogenes serotype 4b (strain F2365).